We begin with the raw amino-acid sequence, 386 residues long: MVGVSVLGISGSVGTSTVKVLRQFPDQFDLRSFSVHSNWNVAKALVEEFSPEVICITDPKLVGKFGDSYLSTKILYGDKALIDLVQLPSVGVVVTAVMGARGVLPTIAAIEAGKKIAIANKETLVTFGPLINRLVAKHNTVMVPVDSEHNALFQLIERETRSNIRAITLTASGGSFRTLPLEALEHVSVKQALNHPTWSMGPKITVDSAGLINKGLEVIEAHFLFGFSYDEIEVVIHPQSITHGIIETTDGACLLYASHPDMVYPIAHSLFYPNPTPQMLIERKPSTWNTFEFFPPDTKRYPGLLLAYQAGKAGGAAPGIFNAANEEAVALFLEEKISFTTIPRLIESALNQIENVFPETLDGYLEKDQETRNYIQREFNQGGVTT.

The NADPH site is built by Ser-10, Gly-11, Ser-12, Val-13, Asn-38, and Asn-120. Residue Lys-121 coordinates 1-deoxy-D-xylulose 5-phosphate. An NADPH-binding site is contributed by Glu-122. Asp-146 contacts Mn(2+). The 1-deoxy-D-xylulose 5-phosphate site is built by Ser-147, Glu-148, Ser-172, and His-195. Glu-148 provides a ligand contact to Mn(2+). Residue Gly-201 participates in NADPH binding. 1-deoxy-D-xylulose 5-phosphate is bound by residues Ser-208, Asn-213, Lys-214, and Glu-217. Glu-217 lines the Mn(2+) pocket.

This sequence belongs to the DXR family. Mg(2+) serves as cofactor. The cofactor is Mn(2+).

It catalyses the reaction 2-C-methyl-D-erythritol 4-phosphate + NADP(+) = 1-deoxy-D-xylulose 5-phosphate + NADPH + H(+). It functions in the pathway isoprenoid biosynthesis; isopentenyl diphosphate biosynthesis via DXP pathway; isopentenyl diphosphate from 1-deoxy-D-xylulose 5-phosphate: step 1/6. Its function is as follows. Catalyzes the NADPH-dependent rearrangement and reduction of 1-deoxy-D-xylulose-5-phosphate (DXP) to 2-C-methyl-D-erythritol 4-phosphate (MEP). In Leptospira biflexa serovar Patoc (strain Patoc 1 / Ames), this protein is 1-deoxy-D-xylulose 5-phosphate reductoisomerase.